The chain runs to 306 residues: Extensin (306 aa).

The first 32 residues, 1–32 (MGRIARGSKMSSLIVSLLVVLVSLNLASETTA), serve as a signal peptide directing secretion. The segment at 33-306 (KYTYSSPPPP…YTSPPPPHHY (274 aa)) is disordered. Composition is skewed to pro residues over residues 38–122 (SPPP…PKHS), 133–152 (SPPP…PKHS), 183–214 (SPPP…PKHS), and 225–290 (SPPP…SPPP).

Hydroxylated on proline residues in the S-P-P-P-P repeat. In terms of processing, O-glycosylated on hydroxyprolines.

It is found in the secreted. The protein localises to the primary cell wall. In terms of biological role, structural component in primary cell wall. The sequence is that of Extensin from Daucus carota (Wild carrot).